The sequence spans 189 residues: Mediator of RNA polymerase II transcription subunit 30 (189 aa).

Positions 138–178 (SPESEDEIEKLEEQALSLRMEIAKKNVHVKELIDKLRELIA) form a coiled coil.

Belongs to the plant Mediator complex subunit 30 family. Component of the Mediator complex.

The protein localises to the nucleus. Functionally, component of the Mediator complex, a coactivator involved in the regulated transcription of nearly all RNA polymerase II-dependent genes. Mediator functions as a bridge to convey information from gene-specific regulatory proteins to the basal RNA polymerase II transcription machinery. The Mediator complex, having a compact conformation in its free form, is recruited to promoters by direct interactions with regulatory proteins and serves for the assembly of a functional preinitiation complex with RNA polymerase II and the general transcription factors. This chain is Mediator of RNA polymerase II transcription subunit 30 (MED30), found in Arabidopsis thaliana (Mouse-ear cress).